Here is a 201-residue protein sequence, read N- to C-terminus: Small ribosomal subunit protein uS4 (201 aa).

The interval 27 to 47 (SKKNYPPGQHGNSRKRKTSEY) is disordered. An S4 RNA-binding domain is found at 92-152 (GRLDNVVYRL…EKSKSMEVIA (61 aa)).

The protein belongs to the universal ribosomal protein uS4 family. In terms of assembly, part of the 30S ribosomal subunit. Contacts protein S5. The interaction surface between S4 and S5 is involved in control of translational fidelity.

Functionally, one of the primary rRNA binding proteins, it binds directly to 16S rRNA where it nucleates assembly of the body of the 30S subunit. With S5 and S12 plays an important role in translational accuracy. This chain is Small ribosomal subunit protein uS4, found in Parabacteroides distasonis (strain ATCC 8503 / DSM 20701 / CIP 104284 / JCM 5825 / NCTC 11152).